The chain runs to 408 residues: Aminoacylase-1B (408 aa).

A Zn(2+)-binding site is contributed by His80. Asp82 is an active-site residue. Position 113 (Asp113) interacts with Zn(2+). Glu147 (proton acceptor) is an active-site residue. Zn(2+)-binding residues include Glu148, Glu175, and His373. Phosphoserine is present on Ser408.

Belongs to the peptidase M20A family. Homodimer. Requires Zn(2+) as cofactor. As to expression, expressed in kidney.

It localises to the cytoplasm. It carries out the reaction an N-acyl-L-amino acid + H2O = an L-alpha-amino acid + a carboxylate. The catalysed reaction is an N-acetyl-L-cysteine-S-conjugate + H2O = an S-substituted L-cysteine + acetate. Its function is as follows. Involved in the hydrolysis of N-acylated or N-acetylated amino acids (except L-aspartate). The sequence is that of Aminoacylase-1B (Acy1b) from Rattus norvegicus (Rat).